Reading from the N-terminus, the 266-residue chain is 4-hydroxy-tetrahydrodipicolinate reductase (266 aa).

10–15 contacts NAD(+); that stretch reads GPRGRM. K38 lines the NADP(+) pocket. Residues 99 to 101 and 125 to 128 contribute to the NAD(+) site; these read GTT and APNF. Catalysis depends on H155, which acts as the Proton donor/acceptor. H156 contacts (S)-2,3,4,5-tetrahydrodipicolinate. The active-site Proton donor is K159. 165–166 contacts (S)-2,3,4,5-tetrahydrodipicolinate; that stretch reads GT.

The protein belongs to the DapB family.

It is found in the cytoplasm. The catalysed reaction is (S)-2,3,4,5-tetrahydrodipicolinate + NAD(+) + H2O = (2S,4S)-4-hydroxy-2,3,4,5-tetrahydrodipicolinate + NADH + H(+). It carries out the reaction (S)-2,3,4,5-tetrahydrodipicolinate + NADP(+) + H2O = (2S,4S)-4-hydroxy-2,3,4,5-tetrahydrodipicolinate + NADPH + H(+). It functions in the pathway amino-acid biosynthesis; L-lysine biosynthesis via DAP pathway; (S)-tetrahydrodipicolinate from L-aspartate: step 4/4. Catalyzes the conversion of 4-hydroxy-tetrahydrodipicolinate (HTPA) to tetrahydrodipicolinate. The chain is 4-hydroxy-tetrahydrodipicolinate reductase from Bacillus thuringiensis subsp. konkukian (strain 97-27).